A 457-amino-acid chain; its full sequence is UDP-N-acetylmuramate--L-alanine ligase (457 aa).

118 to 124 (GTHGKTT) contacts ATP.

This sequence belongs to the MurCDEF family.

It localises to the cytoplasm. It carries out the reaction UDP-N-acetyl-alpha-D-muramate + L-alanine + ATP = UDP-N-acetyl-alpha-D-muramoyl-L-alanine + ADP + phosphate + H(+). Its pathway is cell wall biogenesis; peptidoglycan biosynthesis. In terms of biological role, cell wall formation. The chain is UDP-N-acetylmuramate--L-alanine ligase from Clostridium perfringens (strain 13 / Type A).